Here is a 351-residue protein sequence, read N- to C-terminus: Adenine deaminase (351 aa).

Positions 20, 22, and 200 each coordinate Zn(2+). Glu-203 functions as the Proton donor in the catalytic mechanism. A Zn(2+)-binding site is contributed by Asp-281. Asp-282 is a binding site for substrate.

It belongs to the metallo-dependent hydrolases superfamily. Adenosine and AMP deaminases family. Adenine deaminase type 2 subfamily. Requires Zn(2+) as cofactor.

It catalyses the reaction adenine + H2O + H(+) = hypoxanthine + NH4(+). Functionally, catalyzes the hydrolytic deamination of adenine to hypoxanthine. Plays an important role in the purine salvage pathway and in nitrogen catabolism. The sequence is that of Adenine deaminase from Cupriavidus taiwanensis (strain DSM 17343 / BCRC 17206 / CCUG 44338 / CIP 107171 / LMG 19424 / R1) (Ralstonia taiwanensis (strain LMG 19424)).